The following is a 622-amino-acid chain: Deoxynucleoside triphosphate triphosphohydrolase SAMHD1 (622 aa).

The SAM domain maps to 26 to 89; that stretch reads WDVEDTVAYL…LHCLQKLSQI (64 aa). Residues lysine 95 and valine 96 each coordinate GTP. Residue asparagine 98 coordinates dGTP. Positions 116, 121, and 124 each coordinate GTP. DGTP-binding residues include glutamine 128, leucine 129, valine 135, and arginine 143. DATP is bound at residue glutamine 128. Glutamine 128 lines the dCTP pocket. Glutamine 128 contributes to the dTTP binding site. Arginine 143 contacts dATP. A dCTP-binding site is contributed by arginine 143. DTTP is bound at residue arginine 143. In terms of domain architecture, HD spans 143 to 296; sequence RFEHSIGVGY…GIDVDKWDYF (154 aa). Residues histidine 146, histidine 185, and aspartate 186 each coordinate Mn(2+). The dATP site is built by histidine 189 and histidine 194. Histidine 189 and histidine 194 together coordinate dCTP. Residues histidine 189 and histidine 194 each contribute to the dTTP site. Residue histidine 212 is part of the active site. Residue aspartate 291 participates in Mn(2+) binding. DGTP is bound by residues lysine 292, tyrosine 295, aspartate 299, arginine 313, arginine 332, lysine 334, asparagine 338, arginine 346, tyrosine 354, glutamine 355, histidine 356, and lysine 357. The dATP site is built by lysine 292, tyrosine 295, and aspartate 299. DCTP-binding residues include lysine 292, tyrosine 295, and aspartate 299. Positions 292, 295, and 299 each coordinate dTTP. Residue arginine 346 coordinates dATP. Arginine 346 serves as a coordination point for dCTP. Glutamine 355 contributes to the dATP binding site. Glutamine 355 serves as a coordination point for dCTP. DTTP is bound at residue glutamine 355. Positions 431, 435, and 502 each coordinate GTP. Lysine 502 contributes to the dGTP binding site. The segment at 571–622 is disordered; the sequence is TPLKQDWHAREDEDEEEEEKHRQNQTLPHHTPQRTGRNVKVDLFQARGETKL. Positions 594–606 are enriched in polar residues; sequence NQTLPHHTPQRTG.

This sequence belongs to the SAMHD1 family. As to quaternary structure, homodimer; in absence of GTP and dNTP. Homotetramer; in GTP- and dNTP-bound form. Interacts with rbbp8/CtIP. The cofactor is Zn(2+).

It localises to the nucleus. The protein localises to the chromosome. The enzyme catalyses a 2'-deoxyribonucleoside 5'-triphosphate + H2O = a 2'-deoxyribonucleoside + triphosphate + H(+). It carries out the reaction dATP + H2O = 2'-deoxyadenosine + triphosphate + H(+). It catalyses the reaction dCTP + H2O = 2'-deoxycytidine + triphosphate + H(+). The catalysed reaction is dGTP + H2O = 2'-deoxyguanosine + triphosphate + H(+). The enzyme catalyses dTTP + H2O = thymidine + triphosphate + H(+). Its activity is regulated as follows. Allosterically activated and regulated via the combined actions of GTP and dNTPs (dATP, dGTP, dTTP and dCTP): Allosteric site 1 binds GTP, while allosteric site 2 binds dNTP. Allosteric activation promotes the formation of highly active homotetramers. Its function is as follows. Protein that acts both as a host restriction factor involved in defense response to virus and as a regulator of DNA end resection at stalled replication forks. Has deoxynucleoside triphosphate (dNTPase) activity, which is required to restrict infection by viruses: dNTPase activity reduces cellular dNTP levels to levels too low for retroviral reverse transcription to occur, blocking early-stage virus replication in dendritic and other myeloid cells. Functions during S phase at stalled DNA replication forks to promote the resection of gapped or reversed forks: acts by stimulating the exonuclease activity of MRE11, activating the ATR-CHK1 pathway and allowing the forks to restart replication. Its ability to promote degradation of nascent DNA at stalled replication forks is required to prevent induction of type I interferons, thereby preventing chronic inflammation. Ability to promote DNA end resection at stalled replication forks is independent of dNTPase activity. This chain is Deoxynucleoside triphosphate triphosphohydrolase SAMHD1, found in Danio rerio (Zebrafish).